The primary structure comprises 321 residues: tRNA U34 carboxymethyltransferase (321 aa).

Carboxy-S-adenosyl-L-methionine is bound by residues Lys90, Trp104, Lys109, Gly129, 151-153 (DPT), 180-181 (IE), Met195, Tyr199, and Arg314.

This sequence belongs to the class I-like SAM-binding methyltransferase superfamily. CmoB family. As to quaternary structure, homotetramer.

It carries out the reaction carboxy-S-adenosyl-L-methionine + 5-hydroxyuridine(34) in tRNA = 5-carboxymethoxyuridine(34) in tRNA + S-adenosyl-L-homocysteine + H(+). Catalyzes carboxymethyl transfer from carboxy-S-adenosyl-L-methionine (Cx-SAM) to 5-hydroxyuridine (ho5U) to form 5-carboxymethoxyuridine (cmo5U) at position 34 in tRNAs. The chain is tRNA U34 carboxymethyltransferase from Pasteurella multocida (strain Pm70).